The chain runs to 259 residues: MAALMRVKDSSRCLLLLAAVLMVESSQLGSSRAKLNSIKSSLGGETPAQSANRSAGMNQGLAFGGSKKGKSLGQAYPCSSDKECEVGRYCHSPHQGSSACMLCRRKKKRCHRDGMCCPGTRCNNGICIPVTESILTPHIPALDGTRHRDRNHGHYSNHDLGWQNLGRPHSKMPHIKGHEGDPCLRSSDCIDGFCCARHFWTKICKPVLHQGEVCTKQRKKGSHGLEIFQRCDCAKGLSCKVWKDATYSSKARLHVCQKI.

The signal sequence occupies residues 1–33 (MAALMRVKDSSRCLLLLAAVLMVESSQLGSSRA). The tract at residues 42–70 (LGGETPAQSANRSAGMNQGLAFGGSKKGK) is disordered. Polar residues predominate over residues 47-57 (PAQSANRSAGM). Asparagine 52 is a glycosylation site (N-linked (GlcNAc...) asparagine). Positions 78–127 (CSSDKECEVGRYCHSPHQGSSACMLCRRKKKRCHRDGMCCPGTRCNNGIC) are DKK-type Cys-1. Cystine bridges form between cysteine 183-cysteine 195, cysteine 189-cysteine 204, cysteine 194-cysteine 231, cysteine 214-cysteine 239, and cysteine 233-cysteine 256. The segment at 183–256 (CLRSSDCIDG…YSSKARLHVC (74 aa)) is DKK-type Cys-2.

It belongs to the dickkopf family. As to quaternary structure, interacts with LRP5 and LRP6. May be proteolytically processed by a furin-like protease.

It is found in the secreted. Antagonizes canonical Wnt signaling by inhibiting LRP5/6 interaction with Wnt and by forming a ternary complex with the transmembrane protein KREMEN that promotes internalization of LRP5/6. DKKs play an important role in vertebrate development, where they locally inhibit Wnt regulated processes such as antero-posterior axial patterning, limb development, somitogenesis and eye formation. In the adult, Dkks are implicated in bone formation and bone disease, cancer and Alzheimer disease. The protein is Dickkopf-related protein 2 of Mus musculus (Mouse).